We begin with the raw amino-acid sequence, 136 residues long: Large ribosomal subunit protein uL16 (136 aa).

It belongs to the universal ribosomal protein uL16 family. Part of the 50S ribosomal subunit.

In terms of biological role, binds 23S rRNA and is also seen to make contacts with the A and possibly P site tRNAs. The polypeptide is Large ribosomal subunit protein uL16 (Ehrlichia canis (strain Jake)).